The primary structure comprises 420 residues: Gamma-glutamyl phosphate reductase (420 aa).

The protein belongs to the gamma-glutamyl phosphate reductase family.

It localises to the cytoplasm. The catalysed reaction is L-glutamate 5-semialdehyde + phosphate + NADP(+) = L-glutamyl 5-phosphate + NADPH + H(+). It participates in amino-acid biosynthesis; L-proline biosynthesis; L-glutamate 5-semialdehyde from L-glutamate: step 2/2. Functionally, catalyzes the NADPH-dependent reduction of L-glutamate 5-phosphate into L-glutamate 5-semialdehyde and phosphate. The product spontaneously undergoes cyclization to form 1-pyrroline-5-carboxylate. The sequence is that of Gamma-glutamyl phosphate reductase from Streptococcus pneumoniae (strain P1031).